A 959-amino-acid chain; its full sequence is Autophagy-related protein 18g (959 aa).

2 WD repeats span residues 376–416 (AHTS…SHNA) and 438–479 (ITSA…AAFQ). Residues 802–832 (GSIESAESSEEGSTKQMENLHDSDHMSNSIK) are disordered.

Belongs to the WD repeat PROPPIN family. Component of the PI(3,5)P2 regulatory complex at least composed of ATG18, SAC/FIG4, FAB1 and VAC14. Expressed in leaves.

The protein localises to the preautophagosomal structure membrane. The protein resides in the vacuole membrane. In terms of biological role, the PI(3,5)P2 regulatory complex regulates both the synthesis and turnover of phosphatidylinositol 3,5-bisphosphate (PtdIns(3,5)P2). Required for autophagy. The polypeptide is Autophagy-related protein 18g (ATG18G) (Arabidopsis thaliana (Mouse-ear cress)).